An 81-amino-acid polypeptide reads, in one-letter code: Insect-toxin Cn10 (81 aa).

The signal sequence occupies residues 1–13; sequence ITACLVLIGTVCA. The LCN-type CS-alpha/beta domain occupies 14–79; the sequence is KEGYLVNKST…TYPIPGKTCR (66 aa). Cystine bridges form between C25/C78, C29/C54, C38/C59, and C42/C61. Position 81 (K81) is a propeptide, removed by a carboxypeptidase.

The protein belongs to the long (4 C-C) scorpion toxin superfamily. Sodium channel inhibitor family. Beta subfamily. In terms of tissue distribution, expressed by the venom gland.

Its subcellular location is the secreted. Functionally, beta toxins bind voltage-independently at site-4 of sodium channels (Nav) and shift the voltage of activation toward more negative potentials thereby affecting sodium channel activation and promoting spontaneous and repetitive firing. Is toxic on insects and crustaceans, but not on mammals. The chain is Insect-toxin Cn10 from Centruroides noxius (Mexican scorpion).